A 333-amino-acid chain; its full sequence is 2-oxoglutarate-dependent dioxygenase ucsF (333 aa).

Positions 174 to 296 constitute a Fe2OG dioxygenase domain; it reads NASELRLNHY…RYSIAYLCKA (123 aa). Residues H202, D204, and H264 each coordinate Fe cation. R287 provides a ligand contact to 2-oxoglutarate.

Belongs to the iron/ascorbate-dependent oxidoreductase family. The cofactor is Fe(2+).

It participates in mycotoxin biosynthesis. In terms of biological role, 2-oxoglutarate-dependent dioxygenase; part of the gene cluster that mediates the biosynthesis of UCS1025A, a member of the pyrrolizidinone family that acts as a strong telomerase inhibitor and displays potent antibacterial and antitumor properties. These compounds share a hemiaminal-containing pyrrolizidinone core fused with a gamma-lactone, giving a furopyrrolizidine that is connected to a decalin fragment. The polyketide synthase module (PKS) of the PKS-NRPS ucsA is responsible for the synthesis of the polyketide backbone via the condensation of an acetyl-CoA starter unit with 6 malonyl-CoA units. The downstream nonribosomal peptide synthetase (NRPS) module then amidates the carboxyl end of the polyketide with a 2S,3S-methylproline derived from L-isoleucine by the 2-oxoglutarate-dependent dioxygenase ucsF which converts L-isoleucine to (4S,5S)-4-methylpyrroline-5-carboxylate that is further converted to 2S,3S-methylproline by the pyrroline-5-carboxylate reductase ucsG. Reductive release of the completed aminoacyl polyketide from the assembly line can form the 3-pyrrolin-2-one structure via an intramolecular Knoevenagel reaction. Because ucsA lacks a designated enoylreductase (ER) domain, the required activity is provided the enoyl reductase ucsL. This keto acyclic precursor is the substrate of the Diels-Alderase ucsH, that catalyzes the Diels-Alder cycloaddition. Oxidation of the 3S-methyl group to a carboxylate by the cytochrome P450 monooxygenase ucsK allows an oxa-Michael cyclization that might involve the reductase/dehydrogenase ucsI and which furnishes the furopyrrolizidine. The oxidase ucsJ likely plays a critical role in stereoselective reduction of the C5-C6 double bond to afford the required R-configured carboxylate group. Further enolization and oxidation at C5 by an unidentified enzyme affords the last intermediate that can undergo oxa-Michael cyclization to yield UCS1025A. The protein is 2-oxoglutarate-dependent dioxygenase ucsF of Acremonium sp.